A 245-amino-acid chain; its full sequence is Adenylate kinase (245 aa).

15–20 (GSGKGT) lines the ATP pocket. Positions 35 to 64 (SSGDLLRDAVSKDTPLSQEIKSYLDQGKLL) are NMP. AMP contacts are provided by residues Ser36, Arg41, 62-64 (KLL), 103-106 (GFPR), and Gln110. The tract at residues 143–176 (SRYICPACQGIYNEQQGFSSCPKCSVELIRRSDD) is LID. Arg144 contacts ATP. The Zn(2+) site is built by Cys147 and Cys150. 153 to 154 (IY) contacts ATP. Positions 163 and 166 each coordinate Zn(2+). Positions 173 and 184 each coordinate AMP. Ala212 lines the ATP pocket.

It belongs to the adenylate kinase family. As to quaternary structure, monomer.

Its subcellular location is the cytoplasm. It carries out the reaction AMP + ATP = 2 ADP. It functions in the pathway purine metabolism; AMP biosynthesis via salvage pathway; AMP from ADP: step 1/1. Functionally, catalyzes the reversible transfer of the terminal phosphate group between ATP and AMP. Plays an important role in cellular energy homeostasis and in adenine nucleotide metabolism. The chain is Adenylate kinase from Chlamydia trachomatis serovar A (strain ATCC VR-571B / DSM 19440 / HAR-13).